An 86-amino-acid chain; its full sequence is Large ribosomal subunit protein bL27 (86 aa).

The disordered stretch occupies residues 1–24; sequence MAHKKAGGSTRNGRDSESKRLGVK.

It belongs to the bacterial ribosomal protein bL27 family.

The protein is Large ribosomal subunit protein bL27 of Alcanivorax borkumensis (strain ATCC 700651 / DSM 11573 / NCIMB 13689 / SK2).